A 570-amino-acid chain; its full sequence is Proline--tRNA ligase (570 aa).

This sequence belongs to the class-II aminoacyl-tRNA synthetase family. ProS type 1 subfamily. In terms of assembly, homodimer.

Its subcellular location is the cytoplasm. It catalyses the reaction tRNA(Pro) + L-proline + ATP = L-prolyl-tRNA(Pro) + AMP + diphosphate. Catalyzes the attachment of proline to tRNA(Pro) in a two-step reaction: proline is first activated by ATP to form Pro-AMP and then transferred to the acceptor end of tRNA(Pro). As ProRS can inadvertently accommodate and process non-cognate amino acids such as alanine and cysteine, to avoid such errors it has two additional distinct editing activities against alanine. One activity is designated as 'pretransfer' editing and involves the tRNA(Pro)-independent hydrolysis of activated Ala-AMP. The other activity is designated 'posttransfer' editing and involves deacylation of mischarged Ala-tRNA(Pro). The misacylated Cys-tRNA(Pro) is not edited by ProRS. The chain is Proline--tRNA ligase from Syntrophomonas wolfei subsp. wolfei (strain DSM 2245B / Goettingen).